The primary structure comprises 256 residues: MSLAVRVIPCLDVDAGRVVKGVHFENLKDAGDPVELAAEYYRQRADEITFLDVTASSSHRNTMIDVVSRTAEQVFIPMTVGGGVRTPEDVDSLLRCGADKVGVNTAAINDPSLISRVADRFGNQVLVLSVDARREKGEQHTQSGFEVTTMGGRKSTGIDAIWWVKRAEQLGAGEILLNSMDADGTKEGFDLEMIRAVRKEVKIPIIASGGAGKVEDFPPAIEAGADAVLAASVFHYGILTIADVKAELKKHGYTVR.

Active-site residues include D12 and D131.

This sequence belongs to the HisA/HisF family. In terms of assembly, heterodimer of HisH and HisF.

It is found in the cytoplasm. The enzyme catalyses 5-[(5-phospho-1-deoxy-D-ribulos-1-ylimino)methylamino]-1-(5-phospho-beta-D-ribosyl)imidazole-4-carboxamide + L-glutamine = D-erythro-1-(imidazol-4-yl)glycerol 3-phosphate + 5-amino-1-(5-phospho-beta-D-ribosyl)imidazole-4-carboxamide + L-glutamate + H(+). The protein operates within amino-acid biosynthesis; L-histidine biosynthesis; L-histidine from 5-phospho-alpha-D-ribose 1-diphosphate: step 5/9. IGPS catalyzes the conversion of PRFAR and glutamine to IGP, AICAR and glutamate. The HisF subunit catalyzes the cyclization activity that produces IGP and AICAR from PRFAR using the ammonia provided by the HisH subunit. This is Imidazole glycerol phosphate synthase subunit HisF from Bifidobacterium longum (strain NCC 2705).